We begin with the raw amino-acid sequence, 84 residues long: Phosphoribosylformylglycinamidine synthase subunit PurS (84 aa).

The protein belongs to the PurS family. As to quaternary structure, homodimer. Part of the FGAM synthase complex composed of 1 PurL, 1 PurQ and 2 PurS subunits.

The protein localises to the cytoplasm. It carries out the reaction N(2)-formyl-N(1)-(5-phospho-beta-D-ribosyl)glycinamide + L-glutamine + ATP + H2O = 2-formamido-N(1)-(5-O-phospho-beta-D-ribosyl)acetamidine + L-glutamate + ADP + phosphate + H(+). Its pathway is purine metabolism; IMP biosynthesis via de novo pathway; 5-amino-1-(5-phospho-D-ribosyl)imidazole from N(2)-formyl-N(1)-(5-phospho-D-ribosyl)glycinamide: step 1/2. Its function is as follows. Part of the phosphoribosylformylglycinamidine synthase complex involved in the purines biosynthetic pathway. Catalyzes the ATP-dependent conversion of formylglycinamide ribonucleotide (FGAR) and glutamine to yield formylglycinamidine ribonucleotide (FGAM) and glutamate. The FGAM synthase complex is composed of three subunits. PurQ produces an ammonia molecule by converting glutamine to glutamate. PurL transfers the ammonia molecule to FGAR to form FGAM in an ATP-dependent manner. PurS interacts with PurQ and PurL and is thought to assist in the transfer of the ammonia molecule from PurQ to PurL. This is Phosphoribosylformylglycinamidine synthase subunit PurS from Methanothermobacter thermautotrophicus (strain ATCC 29096 / DSM 1053 / JCM 10044 / NBRC 100330 / Delta H) (Methanobacterium thermoautotrophicum).